Here is a 196-residue protein sequence, read N- to C-terminus: Small nuclear ribonucleoprotein-associated protein B (196 aa).

The Sm domain maps to 7–101; sequence AHSSRLANLI…ILSTVVEDKP (95 aa). Positions 105–132 match the Nuclear localization signal motif; it reads KKERLVRDKKEKKQAQKQTKLRKEKEKK. Residues 108-118 are compositionally biased toward basic and acidic residues; it reads RLVRDKKEKKQ. The interval 108 to 196 is disordered; it reads RLVRDKKEKK…FQPPPGFKRK (89 aa). Over residues 140 to 181 the composition is skewed to polar residues; that stretch reads NTANAKHTSSNSREIAQPSSSRYNGGNDNIGANRSRFNNEAP.

The protein belongs to the snRNP SmB/SmN family. Component of the Sm core complex, present in spliceosomal snRNP U1, U2, U4/U6 and U5. The core complex contains SMB1, SMD1, SMD2, SMD3, SME1, SMX3 and SMX2 (Sm proteins B, D1, D2, D3, E, F and G, respectively), and is probably a heptameric ring structure. SMB1 specifically interacts with SMD3. Belongs to the CWC complex (or CEF1-associated complex), a spliceosome sub-complex reminiscent of a late-stage spliceosome composed of the U2, U5 and U6 snRNAs and at least BUD13, BUD31, BRR2, CDC40, CEF1, CLF1, CUS1, CWC2, CWC15, CWC21, CWC22, CWC23, CWC24, CWC25, CWC27, ECM2, HSH155, IST3, ISY1, LEA1, MSL1, NTC20, PRP8, PRP9, PRP11, PRP19, PRP21, PRP22, PRP45, PRP46, SLU7, SMB1, SMD1, SMD2, SMD3, SMX2, SMX3, SNT309, SNU114, SPP2, SYF1, SYF2, RSE1 and YJU2. Component of the U4/U6-U5 tri-snRNP complex composed of the U4, U6 and U5 snRNAs and at least PRP3, PRP4, PRP6, PRP8, PRP18, PRP38, SNU13, SNU23, SNU66, SNU114, SPP381, SMB1, SMD1, SMD2, SMD3, SMX2, SMX3, LSM2, LSM3, LSM4, LSM5, LSM6, LSM7, LSM8, BRR2 and DIB1. Interacts with the trimethylguanosine synthase TGS1.

It localises to the nucleus. It is found in the cytoplasm. In terms of biological role, plays a role in pre-mRNA splicing as a core component of the spliceosomal U1, U2, U4 and U5 small nuclear ribonucleoproteins (snRNPs), the building blocks of the spliceosome. The sequence is that of Small nuclear ribonucleoprotein-associated protein B (SMB1) from Saccharomyces cerevisiae (strain ATCC 204508 / S288c) (Baker's yeast).